We begin with the raw amino-acid sequence, 568 residues long: 2-succinyl-5-enolpyruvyl-6-hydroxy-3-cyclohexene-1-carboxylate synthase (568 aa).

Belongs to the TPP enzyme family. MenD subfamily. As to quaternary structure, homodimer. It depends on Mg(2+) as a cofactor. The cofactor is Mn(2+). Thiamine diphosphate is required as a cofactor.

The enzyme catalyses isochorismate + 2-oxoglutarate + H(+) = 5-enolpyruvoyl-6-hydroxy-2-succinyl-cyclohex-3-ene-1-carboxylate + CO2. Its pathway is quinol/quinone metabolism; 1,4-dihydroxy-2-naphthoate biosynthesis; 1,4-dihydroxy-2-naphthoate from chorismate: step 2/7. It functions in the pathway quinol/quinone metabolism; menaquinone biosynthesis. Its function is as follows. Catalyzes the thiamine diphosphate-dependent decarboxylation of 2-oxoglutarate and the subsequent addition of the resulting succinic semialdehyde-thiamine pyrophosphate anion to isochorismate to yield 2-succinyl-5-enolpyruvyl-6-hydroxy-3-cyclohexene-1-carboxylate (SEPHCHC). This chain is 2-succinyl-5-enolpyruvyl-6-hydroxy-3-cyclohexene-1-carboxylate synthase, found in Pasteurella multocida (strain Pm70).